Consider the following 377-residue polypeptide: Nitric oxide reductase FlRd-NAD(+) reductase (377 aa).

It belongs to the FAD-dependent oxidoreductase family. It depends on FAD as a cofactor.

The protein localises to the cytoplasm. The enzyme catalyses 2 reduced [nitric oxide reductase rubredoxin domain] + NAD(+) + H(+) = 2 oxidized [nitric oxide reductase rubredoxin domain] + NADH. Its pathway is nitrogen metabolism; nitric oxide reduction. Functionally, one of at least two accessory proteins for anaerobic nitric oxide (NO) reductase. Reduces the rubredoxin moiety of NO reductase. This chain is Nitric oxide reductase FlRd-NAD(+) reductase, found in Salmonella paratyphi C (strain RKS4594).